Consider the following 322-residue polypeptide: Thioredoxin reductase (322 aa).

FAD-binding positions include 12 to 15 (SGPA), 34 to 42 (EGAVTAGGA), Asn51, and Val84. Cys136 and Cys139 are oxidised to a cystine. Residues His176, Arg182, Ile239, and Tyr259 each contribute to the NADP(+) site. FAD-binding positions include Asp279 and 286-289 (RQAI). Residue Arg286 coordinates NADP(+).

The protein belongs to the class-II pyridine nucleotide-disulfide oxidoreductase family. In terms of assembly, homodimer. Requires FAD as cofactor.

It localises to the cytoplasm. It carries out the reaction [thioredoxin]-dithiol + NADP(+) = [thioredoxin]-disulfide + NADPH + H(+). In Streptomyces coelicolor (strain ATCC BAA-471 / A3(2) / M145), this protein is Thioredoxin reductase.